Consider the following 311-residue polypeptide: MRRHLSLLIGSLVLGLSLLIAPAASWAYPFWAQQNYDSPREATGKIVCANCHLAKKLTQAEVPQSVLPDTVFTASVKIPYEEGLLEIGADGSDVGLQVGAVVMLPDGFTLAPQDRWTEEMKEETEGVYFSQYSDDQPNILLVGPIPGDQHQEVVFPLLSPDPATDSNIHFGKYQLHVGGNRGRGQVYPTGEKSNNAVYTAPASGSVAAIEDGDNGSSILTINTADGAAVTETIPVGPQLLVNVGDNVEAGAALTNDPNVGGFGQVDAEIVLQNPVRIYGLLAFFAAVALAQIMLVLKKRQIEKVQAAEGNF.

Positions 1–27 are cleaved as a signal peptide; it reads MRRHLSLLIGSLVLGLSLLIAPAASWA. 4 residues coordinate heme: Tyr28, Cys48, Cys51, and His52. The helical transmembrane segment at 277-297 threads the bilayer; it reads IYGLLAFFAAVALAQIMLVLK.

It belongs to the cytochrome f family. As to quaternary structure, the 4 large subunits of the cytochrome b6-f complex are cytochrome b6, subunit IV (17 kDa polypeptide, PetD), cytochrome f and the Rieske protein, while the 4 small subunits are PetG, PetL, PetM and PetN. The complex functions as a dimer. The cofactor is heme.

The protein localises to the cellular thylakoid membrane. Its function is as follows. Component of the cytochrome b6-f complex, which mediates electron transfer between photosystem II (PSII) and photosystem I (PSI), cyclic electron flow around PSI, and state transitions. The polypeptide is Cytochrome f (Parasynechococcus marenigrum (strain WH8102)).